Reading from the N-terminus, the 255-residue chain is 5'-nucleotidase SurE (255 aa).

Aspartate 8, aspartate 9, serine 40, and asparagine 95 together coordinate a divalent metal cation.

This sequence belongs to the SurE nucleotidase family. The cofactor is a divalent metal cation.

The protein localises to the cytoplasm. The enzyme catalyses a ribonucleoside 5'-phosphate + H2O = a ribonucleoside + phosphate. Functionally, nucleotidase that shows phosphatase activity on nucleoside 5'-monophosphates. The polypeptide is 5'-nucleotidase SurE (Solidesulfovibrio magneticus (strain ATCC 700980 / DSM 13731 / RS-1) (Desulfovibrio magneticus)).